Reading from the N-terminus, the 128-residue chain is Ribonuclease P protein component (128 aa).

Belongs to the RnpA family. As to quaternary structure, consists of a catalytic RNA component (M1 or rnpB) and a protein subunit.

The catalysed reaction is Endonucleolytic cleavage of RNA, removing 5'-extranucleotides from tRNA precursor.. Its function is as follows. RNaseP catalyzes the removal of the 5'-leader sequence from pre-tRNA to produce the mature 5'-terminus. It can also cleave other RNA substrates such as 4.5S RNA. The protein component plays an auxiliary but essential role in vivo by binding to the 5'-leader sequence and broadening the substrate specificity of the ribozyme. The protein is Ribonuclease P protein component of Rhizobium meliloti (strain 1021) (Ensifer meliloti).